The primary structure comprises 326 residues: Phospho-N-acetylmuramoyl-pentapeptide-transferase (326 aa).

The next 10 helical transmembrane spans lie at 13 to 33 (ILAP…IFIP), 57 to 77 (GTPT…ILIM), 85 to 105 (EMIL…DDIL), 121 to 141 (MILL…NVGT), 155 to 175 (NLGI…TNAV), 181 to 201 (IDGL…IIGF), 208 to 228 (VAVF…FNAF), 232 to 252 (IFMG…IALM), 257 to 277 (LFVI…IIQV), and 305 to 325 (VKIV…GFVA).

Belongs to the glycosyltransferase 4 family. MraY subfamily. The cofactor is Mg(2+).

It localises to the cell membrane. The enzyme catalyses UDP-N-acetyl-alpha-D-muramoyl-L-alanyl-gamma-D-glutamyl-meso-2,6-diaminopimeloyl-D-alanyl-D-alanine + di-trans,octa-cis-undecaprenyl phosphate = di-trans,octa-cis-undecaprenyl diphospho-N-acetyl-alpha-D-muramoyl-L-alanyl-D-glutamyl-meso-2,6-diaminopimeloyl-D-alanyl-D-alanine + UMP. It participates in cell wall biogenesis; peptidoglycan biosynthesis. Its function is as follows. Catalyzes the initial step of the lipid cycle reactions in the biosynthesis of the cell wall peptidoglycan: transfers peptidoglycan precursor phospho-MurNAc-pentapeptide from UDP-MurNAc-pentapeptide onto the lipid carrier undecaprenyl phosphate, yielding undecaprenyl-pyrophosphoryl-MurNAc-pentapeptide, known as lipid I. The chain is Phospho-N-acetylmuramoyl-pentapeptide-transferase from Clostridium beijerinckii (strain ATCC 51743 / NCIMB 8052) (Clostridium acetobutylicum).